The sequence spans 73 residues: MATYCLSPLMHLDHFFNKILLMTTTTTTHRKKYINFQEQKLKKQESIGQSQPDVQEQLQHQQLQHHQKLYKIN.

This is an uncharacterized protein from Dictyostelium discoideum (Social amoeba).